Here is a 794-residue protein sequence, read N- to C-terminus: MNIDDKLEGLFLKCGGIDEMQSSRAMVVMGGVSGQSAVSGELQESVLQDRSLPHQEILAADEVLQESEMRQQDMISHDELMVHEETVKNDEEQTDTHERLPQGLQYALNVPISVKQEITFTDVSEQLMRDKKQVREPVDLQKKKKRKQRSPAKILTINEDGSLGLKTPKSHVCEHCNAAFRTNYHLQRHVFIHTGEKPFQCSQCDMRFIQKYLLQRHEKIHTGEKPFRCDECGMRFIQKYHMERHKRTHSGEKPYQCEYCLQYFSRTDRVLKHKRMCHENHDKKLNRCAIKGGLLTSEEDSGFSTSPKDNSLPKKKRQKPEKKSSGMDKESVLDKSDTKKDRNDYLPLYSSSTKVKDEYMVAEYAVEMPHSSVGGSHLEDASGEIHPPKLVLKKINSKRSLKQPLEQSQTISPLSTYEDSKVSKYAFELVDKQALLDSEGSADIDQVDNLQEGPSKPVHSSTNYDDAMQFLKKKRYLQAASNNSREYALNVGTIASQPSVTQAAVASVIDENTTASILDSQALNVEIKSNHDKNVIPDEVLQTLLDHYSHKANGQHEISFSVADTEVTSSISINSSDVPEVTQSENVGSSSQASSSDKANMLQEYSKFLQQALDRTSQNDAYLNSPSLNFVTDNQTLPNPPAFSSIDKQVYAAMPINSFRSGMNSPLRTTPDKSHFGLIVGDSQHPFPFSGDETNHASATSTADFLDQVTSQKKAEAQPVHQAYQMSSFEQPFRAPYHGSRAGIATQFSTANGQVNLRGPGTSAEFSEFPLVNVNDNRAGMTSSPDATTGQTFG.

A Glycyl lysine isopeptide (Lys-Gly) (interchain with G-Cter in SUMO2) cross-link involves residue lysine 6. Residue serine 51 is modified to Phosphoserine. Residues lysine 88, lysine 115, and lysine 132 each participate in a glycyl lysine isopeptide (Lys-Gly) (interchain with G-Cter in SUMO2) cross-link. Residues 171-193 form a C2H2-type 1 zinc finger; the sequence is HVCEHCNAAFRTNYHLQRHVFIH. Threonine 194 is subject to Phosphothreonine. 2 consecutive C2H2-type zinc fingers follow at residues 199 to 221 and 227 to 249; these read FQCSQCDMRFIQKYLLQRHEKIH and FRCDECGMRFIQKYHMERHKRTH. Serine 250 is modified (phosphoserine). The C2H2-type 4 zinc finger occupies 255-278; sequence YQCEYCLQYFSRTDRVLKHKRMCH. Residue lysine 291 forms a Glycyl lysine isopeptide (Lys-Gly) (interchain with G-Cter in SUMO2) linkage. A disordered region spans residues 298–346; sequence EEDSGFSTSPKDNSLPKKKRQKPEKKSSGMDKESVLDKSDTKKDRNDYL. A phosphoserine mark is found at serine 301 and serine 306. Lysine 308 is covalently cross-linked (Glycyl lysine isopeptide (Lys-Gly) (interchain with G-Cter in SUMO2)). Positions 321–344 are enriched in basic and acidic residues; that stretch reads EKKSSGMDKESVLDKSDTKKDRND. Lysine 356 participates in a covalent cross-link: Glycyl lysine isopeptide (Lys-Gly) (interchain with G-Cter in SUMO1); alternate. Lysine 356 is covalently cross-linked (Glycyl lysine isopeptide (Lys-Gly) (interchain with G-Cter in SUMO2); alternate). A Glycyl lysine isopeptide (Lys-Gly) (interchain with G-Cter in SUMO2) cross-link involves residue lysine 402. Serine 412 is subject to Phosphoserine. Glycyl lysine isopeptide (Lys-Gly) (interchain with G-Cter in SUMO2) cross-links involve residues lysine 421 and lysine 424. The segment covering 574 to 588 has biased composition (polar residues); it reads NSSDVPEVTQSENVG. Residues 574-596 form a disordered region; it reads NSSDVPEVTQSENVGSSSQASSS. N6-acetyllysine is present on lysine 607. A phosphoserine mark is found at serine 665 and serine 784.

The protein belongs to the krueppel C2H2-type zinc-finger protein family. Interacts with HNRNPDL. Interacts with the 5FMC complex; the interaction requires association with CHTOP. Interacts with CAVIN1. In terms of processing, sumoylated with SUMO2. Desumoylated by SENP3, resulting in the stimulation of transcription of its target genes. As to expression, expressed in heart, lung, kidney, skeletal muscle, liver, brain and spleen.

The protein localises to the nucleus. Involved in transcriptional regulation. Represses the transcription of a number of genes including gastrin, stromelysin and enolase. Binds to the G-rich box in the enhancer region of these genes. The protein is Zinc finger protein 148 (Znf148) of Rattus norvegicus (Rat).